The primary structure comprises 262 residues: Phosphonates import ATP-binding protein PhnC 3 (262 aa).

Positions 3–245 constitute an ABC transporter domain; sequence IQLECLSVTY…ELNRIYGNAE (243 aa). 36–43 lines the ATP pocket; the sequence is GASGSGKS.

Belongs to the ABC transporter superfamily. Phosphonates importer (TC 3.A.1.9.1) family. As to quaternary structure, the complex is composed of two ATP-binding proteins (PhnC), two transmembrane proteins (PhnE) and a solute-binding protein (PhnD).

It is found in the cell inner membrane. The enzyme catalyses phosphonate(out) + ATP + H2O = phosphonate(in) + ADP + phosphate + H(+). Its function is as follows. Part of the ABC transporter complex PhnCDE involved in phosphonates import. Responsible for energy coupling to the transport system. This chain is Phosphonates import ATP-binding protein PhnC 3, found in Nostoc sp. (strain PCC 7120 / SAG 25.82 / UTEX 2576).